A 513-amino-acid polypeptide reads, in one-letter code: Serine/threonine protein phosphatase 2A 55 kDa regulatory subunit B alpha isoform (513 aa).

Met1 bears the N-acetylmethionine mark. WD repeat units follow at residues 36–75 (QEVD…NSSG), 112–153 (EIEE…IKKI), 232–270 (AHDY…QSFN), 281–321 (DLSE…LCDS), 340–378 (EIIA…GPVA), and 483–513 (DYTT…MYYA).

The protein belongs to the phosphatase 2A regulatory subunit B family. As to quaternary structure, PP2A consists of a common heteromeric enzyme, composed of a catalytic subunit (subunits C), a constant regulatory subunit (subunit A), and a variety of regulatory subunits such as subunits B (the R2/B/PR55/B55, R3/B''/PR72/PR130/PR59 and R5/B'/B56 families). Interacts with SIC/RON3. As to expression, expressed ubiquitously.

In terms of biological role, the B regulatory subunit may modulate substrate selectivity and catalytic activity, and may also direct the localization of the catalytic enzyme to a particular subcellular compartment. This Arabidopsis thaliana (Mouse-ear cress) protein is Serine/threonine protein phosphatase 2A 55 kDa regulatory subunit B alpha isoform (PP2AB1).